The following is a 325-amino-acid chain: Lipoyl synthase (325 aa).

Residues cysteine 66, cysteine 71, cysteine 77, cysteine 92, cysteine 96, cysteine 99, and serine 303 each contribute to the [4Fe-4S] cluster site. The Radical SAM core domain occupies 78-292 (WEDREATFLI…AQFAEGLGFA (215 aa)).

This sequence belongs to the radical SAM superfamily. Lipoyl synthase family. [4Fe-4S] cluster is required as a cofactor.

The protein localises to the cytoplasm. The catalysed reaction is [[Fe-S] cluster scaffold protein carrying a second [4Fe-4S](2+) cluster] + N(6)-octanoyl-L-lysyl-[protein] + 2 oxidized [2Fe-2S]-[ferredoxin] + 2 S-adenosyl-L-methionine + 4 H(+) = [[Fe-S] cluster scaffold protein] + N(6)-[(R)-dihydrolipoyl]-L-lysyl-[protein] + 4 Fe(3+) + 2 hydrogen sulfide + 2 5'-deoxyadenosine + 2 L-methionine + 2 reduced [2Fe-2S]-[ferredoxin]. Its pathway is protein modification; protein lipoylation via endogenous pathway; protein N(6)-(lipoyl)lysine from octanoyl-[acyl-carrier-protein]: step 2/2. Catalyzes the radical-mediated insertion of two sulfur atoms into the C-6 and C-8 positions of the octanoyl moiety bound to the lipoyl domains of lipoate-dependent enzymes, thereby converting the octanoylated domains into lipoylated derivatives. The chain is Lipoyl synthase from Mycobacterium sp. (strain JLS).